The primary structure comprises 155 residues: UPF0266 membrane protein LMHCC_1856 (155 aa).

A run of 3 helical transmembrane segments spans residues 8 to 28 (IFLFAANILTVLYILYNDAVI), 46 to 66 (RWDGYIFVGIIVLLFVSNTFF), and 70 to 90 (PFSTSVLLGIMGVLFIYICFF).

It belongs to the UPF0266 family.

The protein localises to the cell membrane. This is UPF0266 membrane protein LMHCC_1856 from Listeria monocytogenes serotype 4a (strain HCC23).